Reading from the N-terminus, the 589-residue chain is Glucose starvation modulator protein 1 (589 aa).

A DNA-binding region (zn(2)-C6 fungal-type) is located at residues 20–48 (CVFCHQKHLQCSNERPCKNCVKRNIGHEC). Disordered stretches follow at residues 59-90 (LTGN…PSVA), 218-240 (NNSN…NPEP), and 340-362 (ANGQ…PGNG). The segment covering 80–90 (TPITASSPSVA) has biased composition (polar residues). Positions 347-357 (LLDHNKDDSRK) are enriched in basic and acidic residues. A PAS domain is found at 471 to 542 (SLLDYKKLVE…FKFFKNIAVN (72 aa)).

This sequence belongs to the ERT1/acuK family.

Its subcellular location is the nucleus. Transcription factor which regulates nonfermentable carbon utilization. This is Glucose starvation modulator protein 1 (GSM1) from Candida tropicalis (strain ATCC MYA-3404 / T1) (Yeast).